The chain runs to 283 residues: Ribosomal RNA small subunit methyltransferase A (283 aa).

Positions 22, 24, 49, 70, and 113 each coordinate S-adenosyl-L-methionine.

The protein belongs to the class I-like SAM-binding methyltransferase superfamily. rRNA adenine N(6)-methyltransferase family. RsmA subfamily.

The protein localises to the cytoplasm. The enzyme catalyses adenosine(1518)/adenosine(1519) in 16S rRNA + 4 S-adenosyl-L-methionine = N(6)-dimethyladenosine(1518)/N(6)-dimethyladenosine(1519) in 16S rRNA + 4 S-adenosyl-L-homocysteine + 4 H(+). In terms of biological role, specifically dimethylates two adjacent adenosines (A1518 and A1519) in the loop of a conserved hairpin near the 3'-end of 16S rRNA in the 30S particle. May play a critical role in biogenesis of 30S subunits. The sequence is that of Ribosomal RNA small subunit methyltransferase A from Myxococcus xanthus (strain DK1622).